The primary structure comprises 601 residues: Beta-phellandrene synthase (601 aa).

The transit peptide at 1 to 35 (MSTISIHHVGILRNPLPSKNKRALINNPWSLSLPR) directs the protein to the chloroplast. The Mn(2+) site is built by Asp356 and Asp360. A DDXXD motif motif is present at residues 356 to 360 (DDVYD). 2 homodimerization regions span residues 362–368 (YGTLDEL) and 434–471 (EAEWYESGYAPSLEEYLSIATISIGLIPIVIPLDLSIP). The Mn(2+) site is built by Asp499 and Glu507.

It belongs to the terpene synthase family. Homodimer. Mn(2+) is required as a cofactor. Mg(2+) serves as cofactor. In terms of tissue distribution, expressed in peltate glandular trichomes. Present at low levels in flowers and stems.

It is found in the plastid. The protein localises to the chloroplast. The catalysed reaction is (2E)-geranyl diphosphate = beta-phellandrene + diphosphate. The enzyme catalyses (2E)-geranyl diphosphate = (1R,5R)-sabinene + diphosphate. Its pathway is secondary metabolite biosynthesis; terpenoid biosynthesis. Functionally, involved in the biosynthesis of phenolic monoterpenes natural products. Monoterpene synthase that catalyzes mainly the formation of olefins such as sabinene and beta-phellandrene, and minor amounts of other monoterpenes (e.g. myrcene, gamma-terpinene, alpha-thujene and alpha-pinene) from geranyl diphosphate (GPP). This is Beta-phellandrene synthase from Origanum vulgare (Wild marjoram).